The chain runs to 344 residues: UDP-3-O-acylglucosamine N-acyltransferase (344 aa).

Catalysis depends on histidine 248, which acts as the Proton acceptor.

It belongs to the transferase hexapeptide repeat family. LpxD subfamily. Homotrimer.

The catalysed reaction is a UDP-3-O-[(3R)-3-hydroxyacyl]-alpha-D-glucosamine + a (3R)-hydroxyacyl-[ACP] = a UDP-2-N,3-O-bis[(3R)-3-hydroxyacyl]-alpha-D-glucosamine + holo-[ACP] + H(+). It functions in the pathway bacterial outer membrane biogenesis; LPS lipid A biosynthesis. Functionally, catalyzes the N-acylation of UDP-3-O-acylglucosamine using 3-hydroxyacyl-ACP as the acyl donor. Is involved in the biosynthesis of lipid A, a phosphorylated glycolipid that anchors the lipopolysaccharide to the outer membrane of the cell. This is UDP-3-O-acylglucosamine N-acyltransferase from Prochlorococcus marinus subsp. pastoris (strain CCMP1986 / NIES-2087 / MED4).